A 504-amino-acid chain; its full sequence is MTPVVALVGRPNVGKSTLFNRLTRTRNALVADFPGLTRDRKYGHANIAGHDFIVIDTGGIDGTEEGVEEKMAEQSLLAIKEADVVLFLVDARAGLLPADVGIAQYLRQRNKTTVVVANKTDGIDADSHIAEFYQLGLGEVEPIAAAQGRGVTQLIEQVLAPLAEKLEAQAVDSDENVADDEQDEWDSDFDFDNEEDTALLDEALEEDQEETDDKNIKIAIVGRPNVGKSTLTNRILGEERVVVYDMPGTTRDSIYIPMERDGQQYTIIDTAGVRKRGKVHLAVEKFSVIKTLQAIQDANVVLLTIDARDGVSDQDLSLLGFILNAGKSLVIVVNKWDGLSQDIKDNVKSELDRRLDFIDFARVHFISALHGSGVGNLFSSIQEAYQCATKKMTTSMLTRILQLAMDDHQPPLVNGRRVKLKYAHPGGYNPPIIVIHGNQIEKLPDSYKRYLSNYFRKSLKIIGSPIRVLFQEGNNPFAGKKNKLTPSQLRKRKRLMKFIKKSKR.

Positions 3–166 (PVVALVGRPN…QVLAPLAEKL (164 aa)) constitute an EngA-type G 1 domain. Residues 9–16 (GRPNVGKS), 56–60 (DTGGI), and 118–121 (NKTD) contribute to the GTP site. Positions 171–190 (VDSDENVADDEQDEWDSDFD) are disordered. Acidic residues predominate over residues 172 to 190 (DSDENVADDEQDEWDSDFD). The region spanning 216 to 389 (IKIAIVGRPN…SIQEAYQCAT (174 aa)) is the EngA-type G 2 domain. GTP is bound by residues 222 to 229 (GRPNVGKS), 269 to 273 (DTAGV), and 334 to 337 (NKWD). A KH-like domain is found at 390–474 (KKMTTSMLTR…PIRVLFQEGN (85 aa)).

This sequence belongs to the TRAFAC class TrmE-Era-EngA-EngB-Septin-like GTPase superfamily. EngA (Der) GTPase family. As to quaternary structure, associates with the 50S ribosomal subunit.

In terms of biological role, GTPase that plays an essential role in the late steps of ribosome biogenesis. This chain is GTPase Der, found in Glaesserella parasuis serovar 5 (strain SH0165) (Haemophilus parasuis).